The following is a 270-amino-acid chain: MDLSADHILVVFLLTTLAGLATGIGGFIAFFMKRTDTKALTFALGLSGGVMVYISLVELLGEAQHRLMEFEGHTAGSWIAIASFFGGIAVAALIDYLVPEDENPHEARGPEDIHGQASGEFSSSRIKRSGILFALAIGIHNFPEGIATFAAGLDSLTLGTSIALAVAVHNIPEGIAVAVPLYYGTGSRKKALFYSFLSGLAEPVGAAIAMFFLFHFLTPTVLAVLFASVAGIMVFISFDELLPMAERWGHHHISIMGIIAGMLLMAIVLI.

A run of 8 helical transmembrane segments spans residues 8 to 28 (ILVV…GGFI), 40 to 60 (LTFA…VELL), 78 to 98 (WIAI…DYLV), 131 to 151 (ILFA…TFAA), 162 to 182 (IALA…VPLY), 192 to 212 (LFYS…AMFF), 216 to 236 (FLTP…MVFI), and 250 to 270 (HHHI…IVLI). Residues Asn141 and Glu144 each contribute to the Fe(2+) site. Residues Glu144 and His169 each contribute to the Zn(2+) site. Residues Asn170, Glu173, and Glu202 each contribute to the Fe(2+) site. Position 173 (Glu173) interacts with Zn(2+).

Belongs to the ZIP transporter (TC 2.A.5) family. ZupT subfamily.

The protein resides in the cell membrane. It catalyses the reaction Zn(2+)(in) = Zn(2+)(out). Its function is as follows. Mediates zinc uptake. May also transport other divalent cations. This is Zinc transporter ZupT from Akkermansia muciniphila (strain ATCC BAA-835 / DSM 22959 / JCM 33894 / BCRC 81048 / CCUG 64013 / CIP 107961 / Muc).